Here is a 295-residue protein sequence, read N- to C-terminus: Ribosomal RNA small subunit methyltransferase A (295 aa).

6 residues coordinate S-adenosyl-L-methionine: Asn29, Leu31, Gly56, Glu77, Asp102, and Asn128.

Belongs to the class I-like SAM-binding methyltransferase superfamily. rRNA adenine N(6)-methyltransferase family. RsmA subfamily.

The protein localises to the cytoplasm. It catalyses the reaction adenosine(1518)/adenosine(1519) in 16S rRNA + 4 S-adenosyl-L-methionine = N(6)-dimethyladenosine(1518)/N(6)-dimethyladenosine(1519) in 16S rRNA + 4 S-adenosyl-L-homocysteine + 4 H(+). Its function is as follows. Specifically dimethylates two adjacent adenosines (A1518 and A1519) in the loop of a conserved hairpin near the 3'-end of 16S rRNA in the 30S particle. May play a critical role in biogenesis of 30S subunits. The protein is Ribosomal RNA small subunit methyltransferase A of Listeria monocytogenes serovar 1/2a (strain ATCC BAA-679 / EGD-e).